A 530-amino-acid polypeptide reads, in one-letter code: Feruloyl esterase C (530 aa).

A signal peptide spans Met1–Glu25. 6 disulfides stabilise this stretch: Cys31-Cys78, Cys66-Cys117, Cys190-Cys444, Cys259-Cys276, Cys285-Cys294, and Cys506-Cys528. The active-site Acyl-ester intermediate is Ser191. Ca(2+)-binding residues include Asp260, Asp263, Ala265, Asp267, and Val269. Active-site charge relay system residues include Asp403 and His443.

This sequence belongs to the tannase family.

The protein localises to the secreted. The catalysed reaction is feruloyl-polysaccharide + H2O = ferulate + polysaccharide.. Functionally, involved in degradation of plant cell walls. Hydrolyzes the feruloyl-arabinose ester bond in arabinoxylans as well as the feruloyl-galactose and feruloyl-arabinose ester bonds in pectin. Active against methyl esters of sinapate (MSA) and caffeate (MCA). The chain is Feruloyl esterase C (faeC) from Talaromyces stipitatus (strain ATCC 10500 / CBS 375.48 / QM 6759 / NRRL 1006) (Penicillium stipitatum).